A 127-amino-acid polypeptide reads, in one-letter code: Small ribosomal subunit protein uS13 (127 aa).

The interval Pro97–Lys127 is disordered. Residues Gln101 to Lys127 show a composition bias toward basic residues.

The protein belongs to the universal ribosomal protein uS13 family. In terms of assembly, part of the 30S ribosomal subunit. Forms a loose heterodimer with protein S19. Forms two bridges to the 50S subunit in the 70S ribosome.

Located at the top of the head of the 30S subunit, it contacts several helices of the 16S rRNA. In the 70S ribosome it contacts the 23S rRNA (bridge B1a) and protein L5 of the 50S subunit (bridge B1b), connecting the 2 subunits; these bridges are implicated in subunit movement. Contacts the tRNAs in the A and P-sites. This Microcystis aeruginosa (strain NIES-843 / IAM M-2473) protein is Small ribosomal subunit protein uS13.